The primary structure comprises 348 residues: MSSDWIFGACAVPDARMRSAALARQEQLTKPPGALGRLEHLAVRLAAWQRTDRPGVQRVWIAVYAADHGVAAEGVSAFPQAVTGEMVRNFARGGAAIAVLARELGARLEVVNLGVVNDPGDLPRVRRAWIAPSSANICEQPAMTATQLRDALAAGADSIAQAKSCDTQLFVGGEMGIGNTTAAAALGCALLSQFPQAMAGAGTGLDAEGIAHKATVITRALALHADASSPLERLRRLGGFEIAALVGAYIAAAQAGIPVLVDGFITTAAALVATRLNPGVREWLLFGHRSQERGHAALLRAMDAEPLLQLDLRLGEASGAAVAIPLLRSACALHNGMATFAEAGVSDA.

The active-site Proton acceptor is glutamate 316.

The protein belongs to the CobT family.

It catalyses the reaction 5,6-dimethylbenzimidazole + nicotinate beta-D-ribonucleotide = alpha-ribazole 5'-phosphate + nicotinate + H(+). The protein operates within nucleoside biosynthesis; alpha-ribazole biosynthesis; alpha-ribazole from 5,6-dimethylbenzimidazole: step 1/2. Its function is as follows. Catalyzes the synthesis of alpha-ribazole-5'-phosphate from nicotinate mononucleotide (NAMN) and 5,6-dimethylbenzimidazole (DMB). The sequence is that of Nicotinate-nucleotide--dimethylbenzimidazole phosphoribosyltransferase from Xanthomonas euvesicatoria pv. vesicatoria (strain 85-10) (Xanthomonas campestris pv. vesicatoria).